The sequence spans 142 residues: Hemoglobin subunit alpha (142 aa).

The region spanning 2-142 (VLSDANKQEI…LVHQLSSKYR (141 aa)) is the Globin domain. His60 is a binding site for O2. Position 89 (His89) interacts with heme b.

It belongs to the globin family. Heterotetramer of two alpha chains and two beta chains. In terms of tissue distribution, red blood cells.

Its function is as follows. Involved in oxygen transport from gills to the various peripheral tissues. In Bathyraja eatonii (Eaton's skate), this protein is Hemoglobin subunit alpha (HBA).